We begin with the raw amino-acid sequence, 313 residues long: MMENFKHTTVLLDEAVNGLNIRPDGIYIDGTFGRGGHSRLILSQLGEEGRLLAIDRDPQAIAVAQAINDPRFSIIHGPFSALADYVAERELTGKIDGILLDLGVSSPQLDDAERGFSFMRDGPLDMRMDPTRGQSAAEWLQTAEEADIAWVLKTFGEERFAKRIARAIVERNREQPMTRTKELAEVVAAATPVKDKFKHPATRTFQAVRIWVNSELEEIEQALKSSLSVLAPGGRLSIISFHSLEDRIVKRFMREQSRGPQVPAGLPMTEAQLKKLGGRELRALGKLMPGEKEVAENPRARSSVLRIAERTNA.

Residues 35-37, D55, F79, D101, and Q108 each bind S-adenosyl-L-methionine; that span reads GGH.

The protein belongs to the methyltransferase superfamily. RsmH family.

The protein resides in the cytoplasm. It carries out the reaction cytidine(1402) in 16S rRNA + S-adenosyl-L-methionine = N(4)-methylcytidine(1402) in 16S rRNA + S-adenosyl-L-homocysteine + H(+). Its function is as follows. Specifically methylates the N4 position of cytidine in position 1402 (C1402) of 16S rRNA. In Salmonella newport (strain SL254), this protein is Ribosomal RNA small subunit methyltransferase H.